The sequence spans 622 residues: MPASNDPVAASRRCETVSADVAIIGAGPVGLMIANYLGLQGVRVVVLEKLEQIIDYPRAIGLDDEALRVFQSVGLADVLLPHTTPDHWMRFVTHTGHCFASIEPRTDEFGWSRRNAFIQPLADRVLYEGLRRFPHVQVLFGTSVSGFTQDPAGVTIEADDEKGGRRTVRASYMVGADGGNSFVRRLLDVPFEGRTKPNQWIVVDVRNDPIGSPHIYMHCDPQRPYVSAALPHGIRRFEFMVMPGETEEELSKPENMAALIRKVVADPQKVDYIRKRVYTHNARLASTFRVDRVLLAGDAAHIMPVWQGQGYNSGIRDASNLGWKLAMVVKQLAGDALLDTYTAERRAHARSMIHLSEVAGDIFAPTSRFGIKFRDAFVRTFNVVPAMKRYFVEMRFKPMPRYETGVVLLAERKRKHGVMARVLERSGHSAPGRLLGLMSEKRESLLGRLVYGRDPSCHSPVGRMFIQPRVRTAEGSVVRLDDVLGSRFAIIGWGSDPTFGLSPLARETWQRLGGCFVLAKPDNQLDFHDDVPAGVIAIGDVQGRLKEWFARVPESVVLLRPDRFVAGMCTPQQVSDCIGELALKLSLKPAEQPAVKLAVPERAVAPESVAGVAAVAAVATRA.

FAD is bound by residues 20–49 (DVAIIGAGPVGLMIANYLGLQGVRVVVLEK) and 288–298 (FRVDRVLLAGD).

This sequence belongs to the PheA/TfdB FAD monooxygenase family. The cofactor is FAD.

The catalysed reaction is 3-(3-hydroxyphenyl)propanoate + NADH + O2 + H(+) = 3-(2,3-dihydroxyphenyl)propanoate + NAD(+) + H2O. It catalyses the reaction (2E)-3-(3-hydroxyphenyl)prop-2-enoate + NADH + O2 + H(+) = (2E)-3-(2,3-dihydroxyphenyl)prop-2-enoate + NAD(+) + H2O. It participates in aromatic compound metabolism; 3-phenylpropanoate degradation. In terms of biological role, catalyzes the insertion of one atom of molecular oxygen into position 2 of the phenyl ring of 3-(3-hydroxyphenyl)propionate (3-HPP) and hydroxycinnamic acid (3HCI). The protein is 3-(3-hydroxy-phenyl)propionate/3-hydroxycinnamic acid hydroxylase of Paraburkholderia xenovorans (strain LB400).